The following is a 354-amino-acid chain: Guanine nucleotide-binding protein G(i) subunit alpha (354 aa).

G2 carries N-myristoyl glycine lipidation. C3 is lipidated: S-palmitoyl cysteine. The 323-residue stretch at 32–354 folds into the G-alpha domain; it reads REVKLLLLGA…KNNLKDCGLF (323 aa). The segment at 35–48 is G1 motif; it reads KLLLLGAGESGKST. GTP contacts are provided by residues 40 to 47, 175 to 181, 200 to 204, 269 to 272, and A326; these read GAGESGKS, LRTRVKT, DVGGQ, and NKKD. Positions 47 and 181 each coordinate Mg(2+). The interval 173–181 is G2 motif; that stretch reads DVLRTRVKT. The G3 motif stretch occupies residues 196-205; that stretch reads FKMFDVGGQR. The tract at residues 265–272 is G4 motif; it reads ILFLNKKD. Residues 324–329 form a G5 motif region; the sequence is TCATDT.

Belongs to the G-alpha family. G(i/o/t/z) subfamily. G proteins are composed of 3 units; alpha, beta and gamma. The alpha chain contains the guanine nucleotide binding site.

Functionally, guanine nucleotide-binding proteins (G proteins) are involved as modulators or transducers in various transmembrane signaling systems. The G(i) proteins are involved in hormonal regulation of adenylate cyclase: they inhibit the cyclase in response to beta-adrenergic stimuli. The protein is Guanine nucleotide-binding protein G(i) subunit alpha of Lymnaea stagnalis (Great pond snail).